The following is a 233-amino-acid chain: Phycoerythrobilin synthase (233 aa).

Belongs to the HY2 family.

The catalysed reaction is (3Z)-phycoerythrobilin + 2 oxidized 2[4Fe-4S]-[ferredoxin] = biliverdin IXalpha + 2 reduced 2[4Fe-4S]-[ferredoxin] + 4 H(+). Its function is as follows. Plays a role in phycoerythrobilin biosynthesis, the red pigment chromophore photosynthetically active biliproteins of the host cyanobacteria. Uses a four-electron reduction to carry out the reactions catalyzed by two enzymes (EC 1.3.7.2 and EC 1.3.7.3) in host. The polypeptide is Phycoerythrobilin synthase (pebS) (Prochlorococcus).